The sequence spans 669 residues: Leucine zipper putative tumor suppressor 2 (669 aa).

A compositionally biased stretch (low complexity) spans 1–25 (MAIVQTLPVPLEPAPEAATAPQAPV). 4 disordered regions span residues 1-56 (MAIV…PTFF), 92-131 (NEDFRTESPPSPSSDVEDAREQRAHNAHLRGPPPKLIPVS), 150-201 (PVLP…AADK), and 215-323 (GTLS…SDEA). Positions 1–332 (MAIVQTLPVP…ALLHCVLEGK (332 aa)) are required for centrosomal localization. The span at 172–181 (LSGSQGSLTQ) shows a compositional bias: polar residues. Low complexity predominate over residues 187–199 (ASSSSSSSSSSAA). A compositionally biased stretch (polar residues) spans 215-233 (GTLSDSGRNSLSSLPTYST). Low complexity-rich tracts occupy residues 241–251 (SSPGGHLPSHG) and 267–283 (GPSHSDSGRSSSSKSTG). A Phosphoserine modification is found at Ser-249. The segment covering 284–295 (SLGGRVAGGLLG) has biased composition (gly residues). The residue at position 296 (Ser-296) is a Phosphoserine. The segment covering 298–308 (TRASPDSSSCG) has biased composition (polar residues). The segment covering 311–320 (SPPPPPPPPS) has biased composition (pro residues). A coiled-coil region spans residues 328–649 (VLEGKLRDRE…LELEARELAD (322 aa)). The segment at 447–669 (SGEISLLKQQ…CLEEITATEI (223 aa)) is sufficient for interaction with CTNNB1. Residues 450 to 669 (ISLLKQQLKE…CLEEITATEI (220 aa)) are sufficient for interaction with KATNB1 and for inhibition of katanin-mediated microtubule severing. A Phosphoserine modification is found at Ser-570. Positions 631–640 (LEQELQQLSL) match the Nuclear export signal motif.

The protein belongs to the LZTS2 family. As to quaternary structure, interacts with KATNB1. Also interacts with CTNNB1, gamma-tubulin and KIF23. In terms of tissue distribution, highly expressed in prostate and testis, and at slightly lower levels in spleen, thymus, uterus, small intestine and colon.

The protein localises to the cytoplasm. Its subcellular location is the cytoskeleton. The protein resides in the microtubule organizing center. It is found in the centrosome. Negative regulator of katanin-mediated microtubule severing and release from the centrosome. Required for central spindle formation and the completion of cytokinesis. May negatively regulate axonal outgrowth by preventing the formation of microtubule bundles that are necessary for transport within the elongating axon. Negative regulator of the Wnt signaling pathway. Represses beta-catenin-mediated transcriptional activation by promoting the nuclear exclusion of beta-catenin. The protein is Leucine zipper putative tumor suppressor 2 of Homo sapiens (Human).